A 337-amino-acid polypeptide reads, in one-letter code: Biotin synthase (337 aa).

The Radical SAM core domain occupies 52-281 (ADIQRASLLS…RSRVRLSAGR (230 aa)). [4Fe-4S] cluster contacts are provided by Cys67, Cys71, and Cys74. Cys112, Cys144, Cys204, and Arg276 together coordinate [2Fe-2S] cluster.

The protein belongs to the radical SAM superfamily. Biotin synthase family. Homodimer. Requires [4Fe-4S] cluster as cofactor. [2Fe-2S] cluster serves as cofactor.

The catalysed reaction is (4R,5S)-dethiobiotin + (sulfur carrier)-SH + 2 reduced [2Fe-2S]-[ferredoxin] + 2 S-adenosyl-L-methionine = (sulfur carrier)-H + biotin + 2 5'-deoxyadenosine + 2 L-methionine + 2 oxidized [2Fe-2S]-[ferredoxin]. Its pathway is cofactor biosynthesis; biotin biosynthesis; biotin from 7,8-diaminononanoate: step 2/2. Its function is as follows. Catalyzes the conversion of dethiobiotin (DTB) to biotin by the insertion of a sulfur atom into dethiobiotin via a radical-based mechanism. This chain is Biotin synthase, found in Methylobacterium radiotolerans (strain ATCC 27329 / DSM 1819 / JCM 2831 / NBRC 15690 / NCIMB 10815 / 0-1).